The chain runs to 981 residues: MASSPWGCVCGLLLLLLPLLGTGPALGRGFPRPLENSEIPMIPGAHPKGSVGSEPQAFDVFPENPRADSHRNSDVRHAPAEEMPEKPVASPLGPALYGPKAAQGAQRERLPVTDDLQMAQGPSSHGWTGPLDSQELLQQEAVAPHPVGHPHLTFIPTTPRRQLRVATVPPSLQHEGQEGQWPPRDEGLKAKTKSRVPPTSPSDHQGPPHTLVSHSGTVKRPVLEGQGGFEEHLQEAAQGPHFTQQDPAAPDVGSVPPVEVVYSQEPGAQPDLALARSLPPAEELPVETPKRAGAEVSWEVSSPGPPPKQADLPDAKDSPGPQPTDPPASEAPDRPSKPERAAMNGADPISPQRVRGAVEAPGTPKSLIPGPSDPGPAVNRTESPMGALQPDEAEEWPGRPQSHPPAPPVQAPSTSRRGLIRVTTQRALGQPPPPEPTASSMASAPASSPPANATAPPLRWGPLRRVLSFSWELHVYGVGVLFLLPALLALAALAAAPAGPRLALVAAVLVLVASALRSAYMLTDPYGSQARLGVRGGLVLYNLPFPLLLTALAALTLLGLGAGLPPPLQNPLLLGAVALVHGVGLLATDLLSTWSVLNLLTQGLSCAWGAAVALGTLCLCRRRLLDGPRGWDASPGPRLLAVAGALGLLASGLQLAAALWLYPGPGRVGRFSWAWWGVHFWLRLLELTWALALALAAVAAARPRPPTEHACWAKLMRLACPAPSGKSEVPERPNNCYAGPSNVGAGSLDISKSLIRNPAESGQLATPSSGAWGSAASLGRGPQGGPGLSRNGVGPAPSLSELDLRPPSPINLSRSIDAALFREHLVRDSVFQRCGLRGLASPPPGGALRPRRGSHPKAELDDAGSSLLRGRCRSLSDVRVRGPVPQHVVEAPDGAAAAASGSSLDSFSRGSLKISWNPWRHGLSSVDSLPLDELPSTVQLLPAPTPAPDSTAARQGDGQGEVQPRGKPGESRSASSDTIEL.

An N-terminal signal peptide occupies residues 1-27 (MASSPWGCVCGLLLLLLPLLGTGPALG). Over 28–474 (RGFPRPLENS…RVLSFSWELH (447 aa)) the chain is Extracellular. Disordered regions lie at residues 43–107 (PGAH…GAQR) and 169–457 (PPSL…TAPP). The segment covering 65 to 85 (PRADSHRNSDVRHAPAEEMPE) has biased composition (basic and acidic residues). An O-glycosylated at one site region spans residues 297–302 (SWEVSS). O-linked (GalNAc...) serine glycosylation is present at S329. Positions 331–340 (APDRPSKPER) are enriched in basic and acidic residues. T363 carries an O-linked (GalNAc...) threonine glycan. N379 carries N-linked (GlcNAc...) asparagine glycosylation. Polar residues predominate over residues 411–427 (APSTSRRGLIRVTTQRA). Residues 437-457 (TASSMASAPASSPPANATAPP) are compositionally biased toward low complexity. Residues 475 to 495 (VYGVGVLFLLPALLALAALAA) form a helical membrane-spanning segment. Over 496–501 (APAGPR) the chain is Cytoplasmic. A helical transmembrane segment spans residues 502-522 (LALVAAVLVLVASALRSAYML). Residues 523–542 (TDPYGSQARLGVRGGLVLYN) are Extracellular-facing. A helical membrane pass occupies residues 543–563 (LPFPLLLTALAALTLLGLGAG). At 564–570 (LPPPLQN) the chain is on the cytoplasmic side. The chain crosses the membrane as a helical span at residues 571–591 (PLLLGAVALVHGVGLLATDLL). Residues 592–598 (STWSVLN) are Extracellular-facing. A helical membrane pass occupies residues 599–619 (LLTQGLSCAWGAAVALGTLCL). The Cytoplasmic portion of the chain corresponds to 620 to 638 (CRRRLLDGPRGWDASPGPR). A helical membrane pass occupies residues 639–659 (LLAVAGALGLLASGLQLAAAL). The Extracellular segment spans residues 660–679 (WLYPGPGRVGRFSWAWWGVH). A helical membrane pass occupies residues 680-700 (FWLRLLELTWALALALAAVAA). At 701–981 (ARPRPPTEHA…RSASSDTIEL (281 aa)) the chain is on the cytoplasmic side. Positions 759–807 (AESGQLATPSSGAWGSAASLGRGPQGGPGLSRNGVGPAPSLSELDLRPP) are disordered. Residues 765–780 (ATPSSGAWGSAASLGR) are compositionally biased toward low complexity. Position 777 is a phosphoserine (S777). Residue R780 is modified to Omega-N-methylarginine. Residues S789, S798, S808, S815, S854, S874, S902, S903, and S911 each carry the phosphoserine modification. The disordered stretch occupies residues 836–865 (LRGLASPPPGGALRPRRGSHPKAELDDAGS). Positions 937–981 (TVQLLPAPTPAPDSTAARQGDGQGEVQPRGKPGESRSASSDTIEL) are disordered. Residues 972–981 (RSASSDTIEL) are compositionally biased toward polar residues.

The protein resides in the membrane. The protein is Proline-rich transmembrane protein 3 (PRRT3) of Homo sapiens (Human).